The following is a 370-amino-acid chain: Ferrochelatase (370 aa).

Fe cation contacts are provided by His-210 and Glu-291.

It belongs to the ferrochelatase family.

It is found in the cytoplasm. The catalysed reaction is heme b + 2 H(+) = protoporphyrin IX + Fe(2+). It participates in porphyrin-containing compound metabolism; protoheme biosynthesis; protoheme from protoporphyrin-IX: step 1/1. Catalyzes the ferrous insertion into protoporphyrin IX. This chain is Ferrochelatase, found in Marinobacter nauticus (strain ATCC 700491 / DSM 11845 / VT8) (Marinobacter aquaeolei).